An 85-amino-acid chain; its full sequence is Cell division protein ZapA (85 aa).

Residues 60 to 85 adopt a coiled-coil conformation; the sequence is AVNVVHDYLKLKEELERLKGQIKEKD.

This sequence belongs to the ZapA family. Type 2 subfamily. In terms of assembly, homodimer. Interacts with FtsZ.

Its subcellular location is the cytoplasm. Its function is as follows. Activator of cell division through the inhibition of FtsZ GTPase activity, therefore promoting FtsZ assembly into bundles of protofilaments necessary for the formation of the division Z ring. It is recruited early at mid-cell but it is not essential for cell division. This is Cell division protein ZapA from Bacillus licheniformis (strain ATCC 14580 / DSM 13 / JCM 2505 / CCUG 7422 / NBRC 12200 / NCIMB 9375 / NCTC 10341 / NRRL NRS-1264 / Gibson 46).